Reading from the N-terminus, the 408-residue chain is Protein CNPPD1 (408 aa).

The helical transmembrane segment at Cys233–Ile253 threads the bilayer.

The protein belongs to the CNPPD1 family.

Its subcellular location is the membrane. In Rattus norvegicus (Rat), this protein is Protein CNPPD1 (Cnppd1).